The following is a 947-amino-acid chain: Mitogen-activated protein kinase kinase kinase 14 (947 aa).

Disordered regions lie at residues 1–37 (MAVMEMACPGAPGSAVGQQKELPKAKEKTPPLGKKQS) and 135–171 (KGKRRSKARKKRKKKSSKSLAHAGVALAKPLPRTPEQ). Positions 135-151 (KGKRRSKARKKRKKKSS) are enriched in basic residues. Residues 400 to 655 (ATHQLRLGRG…ELGGKVNRAL (256 aa)) form the Protein kinase domain. The tract at residues 401–653 (THQLRLGRGS…AAELGGKVNR (253 aa)) is interaction with ZFP91. ATP is bound by residues 406–414 (LGRGSFGEV) and Lys429. Asp515 acts as the Proton acceptor in catalysis. Phosphothreonine is present on Thr559. Disordered regions lie at residues 662–766 (KSPW…ATVP) and 805–830 (LSDDSEKNPSKASQSSRDTLSSGVHS). Residues 665–674 (WRGEYKEPRH) show a composition bias toward basic and acidic residues. A compositionally biased stretch (pro residues) spans 713–727 (LQPPLPPEPPEPNKS). The segment covering 741 to 752 (EPLPLSSLEPAP) has biased composition (low complexity). Positions 814-829 (SKASQSSRDTLSSGVH) are enriched in polar residues.

Belongs to the protein kinase superfamily. STE Ser/Thr protein kinase family. MAP kinase kinase kinase subfamily. In terms of assembly, interacts with TRAF2, TRAF5, TRAF6, IKKA and NFKB2/P100. Interacts with TRAF3 and PELI3. Interacts with NIBP; the interaction is direct. Interacts with ARRB1 and ARRB2. Interacts with GRB10. Interacts with ZFP91. Interacts with NLRP12; this interaction promotes proteasomal degradation of MAP3K14. Directly interacts with DDX3X. Interacts (via C-terminus and kinase domain) with PPPC3A (via N-terminus) and PPP3CB. In terms of processing, autophosphorylated. Phosphorylation at Thr-559 is required to activate its kinase activity and 'Lys-63'-linked polyubiquitination. Phosphorylated by CHUK/IKKA leading to MAP3K14 destabilization. Ubiquitinated. Undergoes both 'Lys-48'- and 'Lys-63'-linked polyubiquitination. 'Lys-48'-linked polyubiquitination leads to its degradation by the proteasome, while 'Lys-63'-linked polyubiquitination stabilizes and activates it. In terms of tissue distribution, weakly expressed in testis, small intestine, spleen, thymus, peripheral blood leukocytes, prostate, ovary and colon.

It localises to the cytoplasm. It catalyses the reaction L-seryl-[protein] + ATP = O-phospho-L-seryl-[protein] + ADP + H(+). The enzyme catalyses L-threonyl-[protein] + ATP = O-phospho-L-threonyl-[protein] + ADP + H(+). Its function is as follows. Lymphotoxin beta-activated kinase which seems to be exclusively involved in the activation of NF-kappa-B and its transcriptional activity. Phosphorylates CHUK/IKKA, thereby promoting proteolytic processing of NFKB2/P100, which leads to NF-kappa-B activation via the non-canonical pathway. Has an essential role in the non-canonical NF-kappa-B signaling that regulates genes encoding molecules involved in B-cell survival, lymphoid organogenesis, and immune response. Could act in a receptor-selective manner. This Homo sapiens (Human) protein is Mitogen-activated protein kinase kinase kinase 14.